The primary structure comprises 404 residues: Keratin, type I cuticular Ha3-I (404 aa).

The segment at 1–56 (MSYSCGLPNLSCRTSCSSRPCVPPSCHGCTLPGACNIPANVSNCNWFCEGSFNGSE) is head. Residues 56–367 (EKETMQFLND…SLLESEDCKL (312 aa)) form the IF rod domain. A coil 1A region spans residues 57-91 (KETMQFLNDRLASYLEKVRQLERDNAELENLIRER). Residues 92 to 102 (SQQQEPLVCAS) form a linker 1 region. The segment at 103-203 (YQSYFKTIEE…HEQEVNTLRC (101 aa)) is coil 1B. A linker 12 region spans residues 204-219 (QLGGRLNVEVDAAPAV). A coil 2 region spans residues 220–363 (DLNQVLNETR…NTYRSLLESE (144 aa)). The interval 364–404 (DCKLPSNPCAITNACDKSTGPCISNPCGPRARCGPCNTFGY) is tail.

It belongs to the intermediate filament family.

The sequence is that of Keratin, type I cuticular Ha3-I from Pan troglodytes (Chimpanzee).